Reading from the N-terminus, the 323-residue chain is Acetyl esterase (323 aa).

The short motif at His91 to Gly93 is the Involved in the stabilization of the negatively charged intermediate by the formation of the oxyanion hole element. Residues Ser165, Asp262, and His292 contribute to the active site.

It belongs to the 'GDXG' lipolytic enzyme family. In terms of assembly, homodimer. Interacts with MalT and MelA.

Its subcellular location is the cytoplasm. Functionally, displays esterase activity towards short chain fatty esters (acyl chain length of up to 8 carbons). Able to hydrolyze triacetylglycerol (triacetin) and tributyrylglycerol (tributyrin), but not trioleylglycerol (triolein) or cholesterol oleate. Negatively regulates MalT activity by antagonizing maltotriose binding. Inhibits MelA galactosidase activity. The chain is Acetyl esterase from Salmonella paratyphi B (strain ATCC BAA-1250 / SPB7).